The primary structure comprises 344 residues: Probable dual-specificity RNA methyltransferase RlmN (344 aa).

E92 acts as the Proton acceptor in catalysis. In terms of domain architecture, Radical SAM core spans 98–325; it reads DEDRATLCVS…TTIRASRGED (228 aa). C105 and C330 are joined by a disulfide. Positions 112, 116, and 119 each coordinate [4Fe-4S] cluster. Residues 157–158, S189, 211–213, and H287 contribute to the S-adenosyl-L-methionine site; these read GE and SLH. Residue C330 is the S-methylcysteine intermediate of the active site.

It belongs to the radical SAM superfamily. RlmN family. Requires [4Fe-4S] cluster as cofactor.

It localises to the cytoplasm. It carries out the reaction adenosine(2503) in 23S rRNA + 2 reduced [2Fe-2S]-[ferredoxin] + 2 S-adenosyl-L-methionine = 2-methyladenosine(2503) in 23S rRNA + 5'-deoxyadenosine + L-methionine + 2 oxidized [2Fe-2S]-[ferredoxin] + S-adenosyl-L-homocysteine. The catalysed reaction is adenosine(37) in tRNA + 2 reduced [2Fe-2S]-[ferredoxin] + 2 S-adenosyl-L-methionine = 2-methyladenosine(37) in tRNA + 5'-deoxyadenosine + L-methionine + 2 oxidized [2Fe-2S]-[ferredoxin] + S-adenosyl-L-homocysteine. Its function is as follows. Specifically methylates position 2 of adenine 2503 in 23S rRNA and position 2 of adenine 37 in tRNAs. This Bacteroides fragilis (strain YCH46) protein is Probable dual-specificity RNA methyltransferase RlmN.